We begin with the raw amino-acid sequence, 395 residues long: Ribosomal RNA small subunit methyltransferase H (395 aa).

S-adenosyl-L-methionine-binding positions include Gly-101–His-103, Asp-120, Tyr-147, Asp-171, and Gln-178.

This sequence belongs to the methyltransferase superfamily. RsmH family.

It is found in the cytoplasm. The enzyme catalyses cytidine(1402) in 16S rRNA + S-adenosyl-L-methionine = N(4)-methylcytidine(1402) in 16S rRNA + S-adenosyl-L-homocysteine + H(+). In terms of biological role, specifically methylates the N4 position of cytidine in position 1402 (C1402) of 16S rRNA. In Mycobacterium marinum (strain ATCC BAA-535 / M), this protein is Ribosomal RNA small subunit methyltransferase H.